Reading from the N-terminus, the 193-residue chain is Holliday junction branch migration complex subunit RuvA (193 aa).

Positions 1–64 are domain I; sequence MIGRIAGTLI…EDAHLLYGFG (64 aa). Residues 65–143 form a domain II region; the sequence is TASERNTFRE…AELGHVPGTP (79 aa). Residues 144 to 151 are flexible linker; the sequence is AVPDSAVD. The domain III stretch occupies residues 151-193; it reads DVLNALLALGYSEKEAAAAIKQVPAGTGVSDGIKLALKALSKA.

The protein belongs to the RuvA family. In terms of assembly, homotetramer. Forms an RuvA(8)-RuvB(12)-Holliday junction (HJ) complex. HJ DNA is sandwiched between 2 RuvA tetramers; dsDNA enters through RuvA and exits via RuvB. An RuvB hexamer assembles on each DNA strand where it exits the tetramer. Each RuvB hexamer is contacted by two RuvA subunits (via domain III) on 2 adjacent RuvB subunits; this complex drives branch migration. In the full resolvosome a probable DNA-RuvA(4)-RuvB(12)-RuvC(2) complex forms which resolves the HJ.

The protein localises to the cytoplasm. Its function is as follows. The RuvA-RuvB-RuvC complex processes Holliday junction (HJ) DNA during genetic recombination and DNA repair, while the RuvA-RuvB complex plays an important role in the rescue of blocked DNA replication forks via replication fork reversal (RFR). RuvA specifically binds to HJ cruciform DNA, conferring on it an open structure. The RuvB hexamer acts as an ATP-dependent pump, pulling dsDNA into and through the RuvAB complex. HJ branch migration allows RuvC to scan DNA until it finds its consensus sequence, where it cleaves and resolves the cruciform DNA. This Cupriavidus necator (strain ATCC 17699 / DSM 428 / KCTC 22496 / NCIMB 10442 / H16 / Stanier 337) (Ralstonia eutropha) protein is Holliday junction branch migration complex subunit RuvA.